Here is a 454-residue protein sequence, read N- to C-terminus: UDP-glycosyltransferase 79A2 (454 aa).

Residues Ser-269, 330–331, 348–356, and 370–373 each bind UDP-alpha-D-glucose; these read WV, HAGYGSVIE, and KVDQ.

It belongs to the UDP-glycosyltransferase family.

Its function is as follows. May glycosylate diterpenes or flavonols in leaves. This is UDP-glycosyltransferase 79A2 from Stevia rebaudiana (Stevia).